A 248-amino-acid chain; its full sequence is Type II restriction enzyme XhoI (248 aa).

This sequence belongs to the XhoI type II restriction endonuclease family.

It catalyses the reaction Endonucleolytic cleavage of DNA to give specific double-stranded fragments with terminal 5'-phosphates.. Functionally, a P subtype restriction enzyme that recognizes the double-stranded sequence 5'-CTCGAG-3' and cleaves after C-1. The polypeptide is Type II restriction enzyme XhoI (Xanthomonas vasicola).